The primary structure comprises 327 residues: Glycerol-3-phosphate dehydrogenase [NAD(P)+] (327 aa).

Residues F13, R34, and K107 each coordinate NADPH. Residues K107 and G135 each contribute to the sn-glycerol 3-phosphate site. A139 is an NADPH binding site. Sn-glycerol 3-phosphate contacts are provided by K190, D243, S253, R254, and N255. K190 acts as the Proton acceptor in catalysis. R254 contributes to the NADPH binding site. NADPH-binding residues include V276 and E277.

Belongs to the NAD-dependent glycerol-3-phosphate dehydrogenase family.

It is found in the cytoplasm. It carries out the reaction sn-glycerol 3-phosphate + NAD(+) = dihydroxyacetone phosphate + NADH + H(+). It catalyses the reaction sn-glycerol 3-phosphate + NADP(+) = dihydroxyacetone phosphate + NADPH + H(+). It participates in membrane lipid metabolism; glycerophospholipid metabolism. In terms of biological role, catalyzes the reduction of the glycolytic intermediate dihydroxyacetone phosphate (DHAP) to sn-glycerol 3-phosphate (G3P), the key precursor for phospholipid synthesis. This chain is Glycerol-3-phosphate dehydrogenase [NAD(P)+], found in Rhizobium johnstonii (strain DSM 114642 / LMG 32736 / 3841) (Rhizobium leguminosarum bv. viciae).